The sequence spans 79 residues: Putative defensin-like protein 29 (79 aa).

A signal peptide spans 1–26; the sequence is MASSGKCVFLVFLCMVALLAPSEVHA. 3 cysteine pairs are disulfide-bonded: Cys-45–Cys-65, Cys-51–Cys-74, and Cys-55–Cys-76.

It belongs to the DEFL family.

The protein localises to the secreted. This is Putative defensin-like protein 29 from Arabidopsis thaliana (Mouse-ear cress).